The sequence spans 250 residues: Pre-protein VI (250 aa).

Positions 1–33 (MEDINFASLAPRHGSRPFMGNWQDIGTSNMSGG) are excised as a propeptide. The interval 34 to 54 (AFSWGSLWSGIKNFGSTIKNY) is amphipathic alpha-helix essential for membrane lytic activity. Positions 36–53 (SWGSLWSGIKNFGSTIKN) are involved in endosomal membrane lysis. The interaction with hexon protein stretch occupies residues 48-74 (GSTIKNYGSKAWNSSTGQMLRDKLKEQ). A Nuclear export signal motif is present at residues 67-76 (LRDKLKEQNF). The tract at residues 103 to 147 (INSKLDPRPPVEEPPPAVETVSPEGRGEKRPRPDREETLVTQIDE) is disordered. Serine 124 is subject to Phosphoserine; by host. Basic and acidic residues predominate over residues 127–140 (GRGEKRPRPDREET). Residues 131-135 (KRPRP) carry the Nuclear localization signal motif. A Phosphothreonine; by host modification is found at threonine 143. A PPXY motif motif is present at residues 148-151 (PPSY). Positions 206–220 (PSRASLRRAASGPRS) are enriched in low complexity. Residues 206–226 (PSRASLRRAASGPRSMRPVAS) form a disordered region. A Nuclear export signal motif is present at residues 231 to 242 (STLNSIVGLGVQ). Residues 233–239 (LNSIVGL) form an interaction with hexon protein region. The tract at residues 240 to 250 (GVQSLKRRRCF) is binds to importin alpha/beta, involved in hexon nuclear import. Positions 245–248 (KRRR) match the Nuclear localization signal motif.

This sequence belongs to the adenoviridae protein VI family. In terms of assembly, interacts with hexon protein; this interaction allows nuclear import of hexon trimers and possibly pre-capsid assembly. Interacts (via C-terminal NLS) with importin alpha/beta. As to quaternary structure, interacts (via PPxY motif) with host NEDD4 ubiquitine ligase; this interaction might play a role in virus intracellular transport during entry. Part of a complex composed of the core-capsid bridging protein, the endosome lysis protein VI and the hexon-linking protein VIII; these interactions bridge the virus core to the capsid. Interacts with peripentonal hexons; this interaction stabilizes the capsid by gluing two peripentonal hexons together and joining them with an adjacent group-of-nine hexon. Heterodimer with the viral protease; disulfide-linked. Interacts with the viral protease. Ubiquitinated by Nedd4 following partial capsid disassembly; which might play a role in intracellular virus movement during entry. In terms of processing, contains the major nuclear import and export signals. Proteolytically removed during virion maturation. The processing of the C-terminus turns the precursor into a mature viral structural protein and abrogates its ability to promote hexon import and act as a potential chaperone protein.

Its subcellular location is the host nucleus. The protein resides in the host cytoplasm. It is found in the virion. During virus assembly, promotes hexon trimers nuclear import through nuclear pore complexes via an importin alpha/beta-dependent mechanism. By analogy to herpesviruses capsid assembly, might act as a chaperone to promote the formation of the icosahedral capsid. Functionally, structural component of the virion that provides increased stability to the particle shell through its interaction with the core-capsid bridging protein and the hexon-linking protein VIII. Fibers shedding during virus entry into host cell allows the endosome lysis protein to be exposed as a membrane-lytic peptide. Exhibits pH-independent membrane fragmentation activity and probably mediates viral rapid escape from host endosome via organellar membrane lysis. It is not clear if it then remains partially associated with the capsid and involved in the intracellular microtubule-dependent transport of capsid to the nucleus, or if it is lost during endosomal penetration. In terms of biological role, cofactor that activates the viral protease. Binds to viral protease in a 1:1 ratio. This chain is Pre-protein VI, found in Human adenovirus C serotype 2 (HAdV-2).